We begin with the raw amino-acid sequence, 714 residues long: DNA ligase (714 aa).

NAD(+) is bound by residues 47-51, 96-97, and Glu128; these read DAEYD and SL. Lys130 functions as the N6-AMP-lysine intermediate in the catalytic mechanism. Residues Arg151, Glu188, Lys306, and Lys330 each coordinate NAD(+). Cys435, Cys438, Cys453, and Cys459 together coordinate Zn(2+). Residues 637–714 form the BRCT domain; that stretch reads RRDTAVAGKT…TEDEWLALIS (78 aa).

Belongs to the NAD-dependent DNA ligase family. LigA subfamily. Requires Mg(2+) as cofactor. The cofactor is Mn(2+).

It catalyses the reaction NAD(+) + (deoxyribonucleotide)n-3'-hydroxyl + 5'-phospho-(deoxyribonucleotide)m = (deoxyribonucleotide)n+m + AMP + beta-nicotinamide D-nucleotide.. In terms of biological role, DNA ligase that catalyzes the formation of phosphodiester linkages between 5'-phosphoryl and 3'-hydroxyl groups in double-stranded DNA using NAD as a coenzyme and as the energy source for the reaction. It is essential for DNA replication and repair of damaged DNA. This Rhodopseudomonas palustris (strain HaA2) protein is DNA ligase.